A 1754-amino-acid polypeptide reads, in one-letter code: Intraflagellar transport protein 172 homolog (1754 aa).

WD repeat units follow at residues Glu14–Phe53, Lys64–Lys103, Pro110–Tyr149, Gly151–Gly190, Gln194–Asp232, Ala283–Gln322, and Thr519–Thr557. TPR repeat units follow at residues Lys623–Tyr656, Gly690–Val723, Ser748–Ala781, Ser807–Leu840, Thr852–Leu885, Arg1041–Tyr1074, Asp1140–Ala1166, Asn1167–Glu1199, Thr1211–His1250, Ser1282–Asp1315, and Phe1698–Ser1733.

The protein belongs to the IFT172 family.

The protein resides in the cell projection. It localises to the cilium. In terms of biological role, required for the maintenance and formation of cilia. This is Intraflagellar transport protein 172 homolog from Drosophila melanogaster (Fruit fly).